Consider the following 248-residue polypeptide: tRNA (guanine-N(1)-)-methyltransferase (248 aa).

Residues Gly113 and 133 to 138 each bind S-adenosyl-L-methionine; that span reads IGDFVL.

The protein belongs to the RNA methyltransferase TrmD family. In terms of assembly, homodimer.

It localises to the cytoplasm. It carries out the reaction guanosine(37) in tRNA + S-adenosyl-L-methionine = N(1)-methylguanosine(37) in tRNA + S-adenosyl-L-homocysteine + H(+). Specifically methylates guanosine-37 in various tRNAs. The polypeptide is tRNA (guanine-N(1)-)-methyltransferase (Dehalococcoides mccartyi (strain ATCC BAA-2266 / KCTC 15142 / 195) (Dehalococcoides ethenogenes (strain 195))).